The chain runs to 158 residues: Transcriptional repressor NrdR (158 aa).

The segment at 3–34 (CPFCNSEETRVIDTRLTDDGHVVRRRRECEHC) is a zinc-finger region. Residues 49–139 (IFVVKKGGQR…VYKEFRDLDH (91 aa)) enclose the ATP-cone domain.

Belongs to the NrdR family. Zn(2+) is required as a cofactor.

Its function is as follows. Negatively regulates transcription of bacterial ribonucleotide reductase nrd genes and operons by binding to NrdR-boxes. This Kosmotoga olearia (strain ATCC BAA-1733 / DSM 21960 / TBF 19.5.1) protein is Transcriptional repressor NrdR.